A 1022-amino-acid polypeptide reads, in one-letter code: Antigenic heat-stable 120 kDa protein (1022 aa).

Positions 1-33 are disordered; sequence MSKNGNQDISEFDPLNREFTEAEKQQQMQQEQE. Over residues 14 to 24 the composition is skewed to basic and acidic residues; that stretch reads PLNREFTEAEK.

It is found in the cytoplasm. The protein is Antigenic heat-stable 120 kDa protein (sca4) of Rickettsia prowazekii (strain Madrid E).